A 150-amino-acid polypeptide reads, in one-letter code: Putative pre-16S rRNA nuclease (150 aa).

It belongs to the YqgF nuclease family.

It is found in the cytoplasm. Functionally, could be a nuclease involved in processing of the 5'-end of pre-16S rRNA. The polypeptide is Putative pre-16S rRNA nuclease (Protochlamydia amoebophila (strain UWE25)).